The sequence spans 262 residues: Small ribosomal subunit protein eS1 (262 aa).

The span at 234–251 shows a compositional bias: basic and acidic residues; it reads DPKEDSGKNVKSLPESKE. A disordered region spans residues 234–262; the sequence is DPKEDSGKNVKSLPESKEATNILTAELKH.

The protein belongs to the eukaryotic ribosomal protein eS1 family. As to quaternary structure, component of the small ribosomal subunit. Mature ribosomes consist of a small (40S) and a large (60S) subunit. The 40S subunit contains about 33 different proteins and 1 molecule of RNA (18S). The 60S subunit contains about 49 different proteins and 3 molecules of RNA (25S, 5.8S and 5S).

It is found in the cytoplasm. This Plasmodium yoelii yoelii protein is Small ribosomal subunit protein eS1.